The primary structure comprises 90 residues: Small ribosomal subunit protein uS15c (90 aa).

Belongs to the universal ribosomal protein uS15 family. As to quaternary structure, part of the 30S ribosomal subunit.

It is found in the plastid. Its subcellular location is the chloroplast. This is Small ribosomal subunit protein uS15c (rps15) from Daucus carota (Wild carrot).